The sequence spans 124 residues: Small ribosomal subunit protein uS12 (124 aa).

Aspartate 89 is subject to 3-methylthioaspartic acid. The tract at residues 105 to 124 (QGVKNRKQARSRYGAKKEKS) is disordered. Basic residues predominate over residues 108-118 (KNRKQARSRYG).

The protein belongs to the universal ribosomal protein uS12 family. As to quaternary structure, part of the 30S ribosomal subunit. Contacts proteins S8 and S17. May interact with IF1 in the 30S initiation complex.

With S4 and S5 plays an important role in translational accuracy. Its function is as follows. Interacts with and stabilizes bases of the 16S rRNA that are involved in tRNA selection in the A site and with the mRNA backbone. Located at the interface of the 30S and 50S subunits, it traverses the body of the 30S subunit contacting proteins on the other side and probably holding the rRNA structure together. The combined cluster of proteins S8, S12 and S17 appears to hold together the shoulder and platform of the 30S subunit. This Mycolicibacterium smegmatis (strain ATCC 700084 / mc(2)155) (Mycobacterium smegmatis) protein is Small ribosomal subunit protein uS12 (rpsL).